Consider the following 2094-residue polypeptide: Protein Ycf2 (2094 aa).

1385 to 1392 (GPPETGRS) provides a ligand contact to ATP.

It belongs to the Ycf2 family.

Its subcellular location is the plastid. The protein resides in the chloroplast stroma. Functionally, probable ATPase of unknown function. Its presence in a non-photosynthetic plant (Epifagus virginiana) and experiments in tobacco indicate that it has an essential function which is probably not related to photosynthesis. The chain is Protein Ycf2 from Huperzia lucidula (Shining clubmoss).